We begin with the raw amino-acid sequence, 435 residues long: GTPase Obg (435 aa).

Positions 6 to 164 constitute an Obg domain; that stretch reads ADFVDRVKIF…RWLELELKIL (159 aa). In terms of domain architecture, OBG-type G spans 165–335; it reads ADVGLVGYPN…LVSKLASIVR (171 aa). GTP contacts are provided by residues 171 to 178, 196 to 200, 217 to 220, 287 to 290, and 316 to 318; these read GYPNVGKS, FTTLI, DIPG, NKID, and SAL. 2 residues coordinate Mg(2+): S178 and T198. The 79-residue stretch at 357–435 folds into the OCT domain; sequence RRLPEKFHLE…IGDFEFEYRE (79 aa).

Belongs to the TRAFAC class OBG-HflX-like GTPase superfamily. OBG GTPase family. In terms of assembly, monomer. Mg(2+) serves as cofactor.

The protein resides in the cytoplasm. In terms of biological role, an essential GTPase which binds GTP, GDP and possibly (p)ppGpp with moderate affinity, with high nucleotide exchange rates and a fairly low GTP hydrolysis rate. Plays a role in control of the cell cycle, stress response, ribosome biogenesis and in those bacteria that undergo differentiation, in morphogenesis control. This Thermotoga sp. (strain RQ2) protein is GTPase Obg.